We begin with the raw amino-acid sequence, 195 residues long: Glycerol-3-phosphate acyltransferase (195 aa).

5 helical membrane-spanning segments follow: residues 7-27 (IFILCYLIGSIPFGFILSYVI), 52-72 (LALLTLLLDALKSFICVAIAQ), 80-100 (ILFLAALFAIIGHMFPVYLFF), 113-133 (LIFIDYRVAVCFLTFWIICFL), and 147-167 (LIALLFICTCYTIVQSVIFTI).

This sequence belongs to the PlsY family. As to quaternary structure, probably interacts with PlsX.

It is found in the cell inner membrane. The catalysed reaction is an acyl phosphate + sn-glycerol 3-phosphate = a 1-acyl-sn-glycero-3-phosphate + phosphate. The protein operates within lipid metabolism; phospholipid metabolism. In terms of biological role, catalyzes the transfer of an acyl group from acyl-phosphate (acyl-PO(4)) to glycerol-3-phosphate (G3P) to form lysophosphatidic acid (LPA). This enzyme utilizes acyl-phosphate as fatty acyl donor, but not acyl-CoA or acyl-ACP. The sequence is that of Glycerol-3-phosphate acyltransferase from Ehrlichia ruminantium (strain Welgevonden).